Here is a 600-residue protein sequence, read N- to C-terminus: Autophagy-related protein 22-2 (600 aa).

The disordered stretch occupies residues 1–30 (MAFASPPASPPDEDGQARAPRYPGEDTTPT). A run of 4 helical transmembrane segments spans residues 41 to 61 (YGIAAEVFAVCGVGSFLPLTL), 117 to 137 (SFAMYTFSLAVLVQALTLISF), 149 to 168 (TLLVTFGFIGSATSMLFVFI), and 186 to 206 (CLGSSFVVLNSFLPVLVASDP). A disordered region spans residues 234–257 (SFDGDEPTHRPPTGLGLGGATGTS). The next 4 membrane-spanning stretches (helical) occupy residues 271–291 (GVGLGYCAAVFVQILSILLLF), 304–324 (TLPLRFVLLLVGIWWFSFTMV), 378–398 (VIVFLVAWFLLSDAMATVSGT), and 414–434 (VALLSITATLSGMAGAFLWPI). A glycan (N-linked (GlcNAc...) asparagine) is linked at Asn-444. The next 4 helical transmembrane spans lie at 449 to 469 (VCIALFELIPLYGMLAYIPLF), 484 to 506 (YPLAIVHGVVSGGLSSYCRSFFG), 526 to 546 (KGSSFIGPAIVGVLIDATGQV), and 549 to 569 (GFFFIAVLIVLPIPLVWMVDA).

This sequence belongs to the ATG22 family.

The protein resides in the vacuole membrane. Its function is as follows. Vacuolar effluxer which mediate the efflux of amino acids resulting from autophagic degradation. The release of autophagic amino acids allows the maintenance of protein synthesis and viability during nitrogen starvation. The chain is Autophagy-related protein 22-2 (atg22-2) from Aspergillus niger (strain ATCC MYA-4892 / CBS 513.88 / FGSC A1513).